A 122-amino-acid chain; its full sequence is MIQTESMLDVADNSGARRVQCIKVLGGSHRRYASVGDIIKVTVKEAIPRGRVKKGDVMNAVVVRTKFGIRRPDGSVIRFDDNAAVLLNNNKAPIATRIFGPVTRELRTEQFMKIISLAPEVL.

The protein belongs to the universal ribosomal protein uL14 family. As to quaternary structure, part of the 50S ribosomal subunit. Forms a cluster with proteins L3 and L19. In the 70S ribosome, L14 and L19 interact and together make contacts with the 16S rRNA in bridges B5 and B8.

Binds to 23S rRNA. Forms part of two intersubunit bridges in the 70S ribosome. The polypeptide is Large ribosomal subunit protein uL14 (Acinetobacter baylyi (strain ATCC 33305 / BD413 / ADP1)).